A 268-amino-acid polypeptide reads, in one-letter code: tRNA threonylcarbamoyladenosine dehydratase (268 aa).

The helical transmembrane segment at 237 to 257 threads the bilayer; the sequence is GFGAATMVTATFGFVAVSHAL.

It belongs to the HesA/MoeB/ThiF family. In terms of assembly, interacts with CsdE.

The protein resides in the membrane. In terms of biological role, catalyzes the ATP-dependent dehydration of threonylcarbamoyladenosine at position 37 (t(6)A37) to form cyclic t(6)A37 (ct(6)A37) in tRNAs that read codons beginning with adenine. TcdA is also part of a sulfur transfer pathway; is able to accept sulfur from CsdA directly in vitro, but CsdE might act as the sulfur donor in vivo. The protein is tRNA threonylcarbamoyladenosine dehydratase (tcdA) of Escherichia coli (strain K12).